A 151-amino-acid polypeptide reads, in one-letter code: UPF0336 protein Franean1_6066 (151 aa).

The MaoC-like domain occupies 8-127 (VGRSYTSDVP…NEVLVTSYEF (120 aa)).

Belongs to the UPF0336 family.

The sequence is that of UPF0336 protein Franean1_6066 from Parafrankia sp. (strain EAN1pec).